A 146-amino-acid chain; its full sequence is Probable transporter XF_0765 (146 aa).

Transmembrane regions (helical) follow at residues 9-29, 46-66, 91-111, and 116-136; these read FTVALAAGLLFGFGLALSEMI, NPSLLFVLGSALAVAFPGMAL, IVFGSAIFGTGWGLTGLCPGP, and LSTGLGPVLLFVAAMAAGMII.

Belongs to the TsuA/YedE (TC 9.B.102) family.

It localises to the cell inner membrane. The chain is Probable transporter XF_0765 from Xylella fastidiosa (strain 9a5c).